A 691-amino-acid polypeptide reads, in one-letter code: Ribonucleoprotein PTB-binding 2 (691 aa).

Residues 1-30 (MAAAAGDGGGEGGAGLGSAAGLGPGPGLRG) show a composition bias toward gly residues. Residues 1 to 47 (MAAAAGDGGGEGGAGLGSAAGLGPGPGLRGQGPSAEAHEGAPDPMPA) form a disordered region. Ala-2 is subject to N-acetylalanine. RRM domains lie at 69 to 140 (RKIL…LQPT), 142 to 220 (ALLC…WMDV), and 231 to 309 (KCLC…FCAP). Disordered regions lie at residues 492 to 522 (PNQH…EGNF) and 543 to 574 (GHHK…GEPP). A compositionally biased stretch (polar residues) spans 548-569 (QQSQPKGTEISSGAASKNQTSL).

In terms of assembly, interacts with PTBP1 and RAVER1.

Its subcellular location is the nucleus. It is found in the cytoplasm. Functionally, may bind single-stranded nucleic acids. The chain is Ribonucleoprotein PTB-binding 2 (RAVER2) from Homo sapiens (Human).